The sequence spans 359 residues: Probable E3 ubiquitin-protein ligase LUL4 (359 aa).

Positions 1–35 (MGISFSNNNRRRDNNNRRHLHHYPPPPPYYYLDPP) are disordered. A lipid anchor (N-myristoyl glycine) is attached at Gly-2. The span at 23–35 (YPPPPPYYYLDPP) shows a compositional bias: pro residues. The segment at 148–267 (FVFDALFDGS…GSFKVKVVKQ (120 aa)) is DAR2 domain. The RING-type zinc finger occupies 302–341 (CVICMTEAKDTAVLPCRHLCMCSDCAKELRLQSNKCPICR).

The protein belongs to the RING-type zinc finger family. LOG2 subfamily.

It carries out the reaction S-ubiquitinyl-[E2 ubiquitin-conjugating enzyme]-L-cysteine + [acceptor protein]-L-lysine = [E2 ubiquitin-conjugating enzyme]-L-cysteine + N(6)-ubiquitinyl-[acceptor protein]-L-lysine.. It functions in the pathway protein modification; protein ubiquitination. In terms of biological role, acts as an E3 ubiquitin-protein ligase, or as part of E3 complex, which accepts ubiquitin from specific E2 ubiquitin-conjugating enzymes and then transfers it to substrates (in vitro). The sequence is that of Probable E3 ubiquitin-protein ligase LUL4 (LUL4) from Arabidopsis thaliana (Mouse-ear cress).